The following is a 204-amino-acid chain: Peptide deformylase (204 aa).

Fe cation contacts are provided by C131 and H174. Residue E175 is part of the active site. H178 contacts Fe cation.

Belongs to the polypeptide deformylase family. The cofactor is Fe(2+).

It carries out the reaction N-terminal N-formyl-L-methionyl-[peptide] + H2O = N-terminal L-methionyl-[peptide] + formate. In terms of biological role, removes the formyl group from the N-terminal Met of newly synthesized proteins. Requires at least a dipeptide for an efficient rate of reaction. N-terminal L-methionine is a prerequisite for activity but the enzyme has broad specificity at other positions. This Streptococcus pyogenes serotype M18 (strain MGAS8232) protein is Peptide deformylase.